The following is a 187-amino-acid chain: Protein GrpE (187 aa).

The interval 1–30 (MEKKETKNETEKTNKQDNKNTKSQKKENLN) is disordered.

The protein belongs to the GrpE family. Homodimer.

The protein localises to the cytoplasm. Functionally, participates actively in the response to hyperosmotic and heat shock by preventing the aggregation of stress-denatured proteins, in association with DnaK and GrpE. It is the nucleotide exchange factor for DnaK and may function as a thermosensor. Unfolded proteins bind initially to DnaJ; upon interaction with the DnaJ-bound protein, DnaK hydrolyzes its bound ATP, resulting in the formation of a stable complex. GrpE releases ADP from DnaK; ATP binding to DnaK triggers the release of the substrate protein, thus completing the reaction cycle. Several rounds of ATP-dependent interactions between DnaJ, DnaK and GrpE are required for fully efficient folding. This Borreliella afzelii (strain PKo) (Borrelia afzelii) protein is Protein GrpE.